A 490-amino-acid polypeptide reads, in one-letter code: MSISSVIKSLQDIMRKDAGVDGDAQRLGQLSWLLFLKIFDTQEEELELEQDDYQFPIPQRYLWRSWAANSEGITGDALLEFVNDDLFPTLKNLTAPIDKNPRGFVVKQAFSDAYNYMKNGTLLRQVINKLNEIDFSSSQERHLFGDIYEQILRDLQSAGNAGEFYTPRAVTRFMVNRIDPKLGESIMDPACGTGGFLACAFDHVKDNYVKTTEDHKTLQQQIYGVEKKQLPHLLCTTNMLLHGIEVPVQIRHDNTLNKPLSSWDEQVDVIVTNPPFGGTEEDGIEKNFPAEMQTRETADLFLQLIIEVLADKGRAAVVLPDGTLFGEGVKTKIKKLLTEECNLHTIVRLPNGVFNPYTGIKTNILFFTKGQPTKEVWFYEHPYPDGVKNYSKTKPMKFEEFQAEIDWWGNEADDFASREENNQAWKVGIDDIIARNFNLDIKNPYQGETISHDPDELLAQYQTQQAEIGELRNQLRDILGAALAGNKGAN.

S-adenosyl-L-methionine-binding positions include 163 to 168, 193 to 195, and Glu-226; these read EFYTPR and TGG.

The protein belongs to the N(4)/N(6)-methyltransferase family. In terms of assembly, the type I restriction/modification system is composed of three polypeptides R, M and S; the restriction enzyme has stoichiometry R(2)M(2)S(1) while the methyltransferase is M(2)S(1).

It carries out the reaction a 2'-deoxyadenosine in DNA + S-adenosyl-L-methionine = an N(6)-methyl-2'-deoxyadenosine in DNA + S-adenosyl-L-homocysteine + H(+). Its function is as follows. The subtype gamma methyltransferase (M) subunit of a type I restriction enzyme. The M and S subunits together form a methyltransferase (MTase) that methylates two adenine residues of the sequence 5'-GAGN(7)ATGC-3'. In the presence of the R subunit the complex can also act as an endonuclease, binding to the same target sequence but cutting the DNA some distance from this site. Whether the DNA is cut or modified depends on the methylation state of the target sequence. When the target site is unmodified, the DNA is cut. When the target site is hemimethylated, the complex acts as a maintenance MTase modifying the DNA so that both strands become methylated. After locating a non-methylated recognition site, the enzyme complex serves as a molecular motor that translocates DNA in an ATP-dependent manner until a collision occurs that triggers cleavage. The chain is Type I restriction enzyme EcoEI methylase subunit (hsdM) from Escherichia coli.